We begin with the raw amino-acid sequence, 260 residues long: Dehydrogenase/reductase SDR family member 4 (260 aa).

Position 18–42 (18–42 (IVTASTDGIGLAIARRLAQDGAHVV)) interacts with NADP(+). Lys74 is subject to N6-acetyllysine; alternate. Lys74 carries the N6-succinyllysine; alternate modification. Ser151 is a binding site for substrate. The active-site Proton acceptor is the Tyr164. Residue Lys168 participates in NADP(+) binding. At Lys198 the chain carries N6-acetyllysine; alternate. Lys198 is subject to N6-succinyllysine; alternate. Position 202 is a phosphoserine (Ser202). Position 209 is an N6-succinyllysine (Lys209). Positions 258–260 (SRL) match the Peroxisomal targeting signal motif.

The protein belongs to the short-chain dehydrogenases/reductases (SDR) family. As to quaternary structure, homotetramer. As to expression, detected in liver and kidney. Detected at lower levels in heart, lung, spleen, small intestine, testis, brain and stomach.

It localises to the peroxisome. The catalysed reaction is a secondary alcohol + NADP(+) = a ketone + NADPH + H(+). It carries out the reaction 3alpha-hydroxy-5beta-pregnan-20-one + NADP(+) = 5beta-pregnan-3,20-dione + NADPH + H(+). The enzyme catalyses 5beta-dihydrotestosterone + NADPH + H(+) = 5beta-androstane-3alpha,17beta-diol + NADP(+). It catalyses the reaction all-trans-retinol + NADP(+) = all-trans-retinal + NADPH + H(+). The catalysed reaction is isatin + NADPH + H(+) = 3-hydroxyindolin-2-one + NADP(+). Inhibited by flavonoids (kaempferol, quercetin, quercitrin, genistein), myristic acid, pyrazole, barbital, phenobarbital and CuSO4. Functionally, NADPH-dependent oxidoreductase which catalyzes the reduction of a variety of compounds bearing carbonyl groups including ketosteroids, alpha-dicarbonyl compounds, aldehydes, aromatic ketones and quinones. Reduces all-trans-retinal and 9-cis retinal. Reduces 3-ketosteroids and benzil into 3alpha-hydroxysteroids and S-benzoin, respectively, in contrast to the stereoselectivity of primates DHRS4s which produce 3beta-hydroxysteroids and R-benzoin. In the reverse reaction, catalyze the NADP-dependent oxidation of 3alpha-hydroxysteroids and alcohol, but with much lower efficiency. Involved in the metabolism of 3alpha-hydroxysteroids, retinoid, isatin and xenobiotic carbonyl compounds. This chain is Dehydrogenase/reductase SDR family member 4 (DHRS4), found in Oryctolagus cuniculus (Rabbit).